Reading from the N-terminus, the 219-residue chain is Glutathione S-transferase (219 aa).

Residues Ser-2–Gly-89 enclose the GST N-terminal domain. Glutathione is bound by residues Tyr-8 to Trp-9, Arg-44 to Trp-47, Lys-51, Asn-60 to Leu-61, and Gln-73 to Thr-74. The 117-residue stretch at Asn-91–Phe-207 folds into the GST C-terminal domain. A substrate-binding site is contributed by Tyr-117.

This sequence belongs to the GST superfamily. Mu family. Homodimer.

The protein localises to the cytoplasm. It catalyses the reaction RX + glutathione = an S-substituted glutathione + a halide anion + H(+). This Dermatophagoides pteronyssinus (European house dust mite) protein is Glutathione S-transferase.